A 35-amino-acid chain; its full sequence is Photosystem II reaction center protein T (35 aa).

The chain crosses the membrane as a helical span at residues 3–23; the sequence is SVAYILIFTLCIGTIFFAIAF.

The protein belongs to the PsbT family. As to quaternary structure, PSII is composed of 1 copy each of membrane proteins PsbA, PsbB, PsbC, PsbD, PsbE, PsbF, PsbH, PsbI, PsbJ, PsbK, PsbL, PsbM, PsbT, PsbX, PsbY, PsbZ, Psb30/Ycf12, peripheral proteins PsbO, CyanoQ (PsbQ), PsbU, PsbV and a large number of cofactors. It forms dimeric complexes.

It is found in the cellular thylakoid membrane. In terms of biological role, found at the monomer-monomer interface of the photosystem II (PS II) dimer, plays a role in assembly and dimerization of PSII. PSII is a light-driven water plastoquinone oxidoreductase, using light energy to abstract electrons from H(2)O, generating a proton gradient subsequently used for ATP formation. In Nostoc punctiforme (strain ATCC 29133 / PCC 73102), this protein is Photosystem II reaction center protein T.